We begin with the raw amino-acid sequence, 407 residues long: Myeloid cell nuclear differentiation antigen (407 aa).

Residues methionine 1 to lysine 88 form the Pyrin domain. Residues leucine 122–proline 211 are disordered. The Nuclear localization signal motif lies at proline 131 to lysine 137. The span at histidine 177–glutamine 199 shows a compositional bias: low complexity. Residues alanine 196–isoleucine 394 enclose the HIN-200 domain.

In terms of assembly, participates in a ternary complex with YY1 and the YY1 target DNA element. Binds nucleolin and nucleophosmin/NPM/B23.

The protein localises to the nucleus. It localises to the cytoplasm. Functionally, may act as a transcriptional activator/repressor in the myeloid lineage. Plays a role in the granulocyte/monocyte cell-specific response to interferon. Stimulates the DNA binding of the transcriptional repressor protein YY1. The sequence is that of Myeloid cell nuclear differentiation antigen (MNDA) from Macaca fascicularis (Crab-eating macaque).